Here is a 700-residue protein sequence, read N- to C-terminus: Putative proline-rich receptor-like protein kinase PERK6 (700 aa).

A disordered region spans residues 1 to 180 (MAEGQSPENS…SGGGSNSSGN (180 aa)). The Extracellular portion of the chain corresponds to 1-186 (MAEGQSPENS…SSGNNEPNTA (186 aa)). Composition is skewed to pro residues over residues 9 to 19 (NSPPSPTPPSP) and 29 to 47 (SPPPSDSSSPSPPAPPPPD). Low complexity predominate over residues 48–137 (DSSNGSPQPP…GNNNDNNNQN (90 aa)). N176 carries N-linked (GlcNAc...) asparagine glycosylation. A helical membrane pass occupies residues 187 to 207 (AIVGIVAGAGLLFLVMILFCV). Over 208 to 700 (CCCRKKKKKH…NNKTTPSRDH (493 aa)) the chain is Cytoplasmic. A disordered region spans residues 249–315 (NLSQQYPGSN…GPSVPPPHPS (67 aa)). Over residues 255–265 (PGSNGNNNWMN) the composition is skewed to low complexity. A compositionally biased stretch (pro residues) spans 266-286 (SPPPPPPGSWQPSPPPPPPPV). T326 carries the post-translational modification Phosphothreonine. The region spanning 337 to 615 (FSQSRLLGQG…VRALEGDATL (279 aa)) is the Protein kinase domain. ATP is bound by residues 343 to 351 (LGQGGFGYV) and K365. At Y410 the chain carries Phosphotyrosine. D461 acts as the Proton acceptor in catalysis. Phosphoserine occurs at positions 465 and 494. Residues T495 and T500 each carry the phosphothreonine modification. At Y508 the chain carries Phosphotyrosine. 2 disordered regions span residues 616–642 (DDLSEGGKAGQSSFLGRGSSSDYDSST) and 659–700 (EYGA…SRDH). The segment covering 689-700 (ANNNKTTPSRDH) has biased composition (polar residues).

The protein belongs to the protein kinase superfamily. Ser/Thr protein kinase family. In terms of tissue distribution, mostly expressed in flower buds.

Its subcellular location is the cell membrane. The catalysed reaction is L-seryl-[protein] + ATP = O-phospho-L-seryl-[protein] + ADP + H(+). It catalyses the reaction L-threonyl-[protein] + ATP = O-phospho-L-threonyl-[protein] + ADP + H(+). This is Putative proline-rich receptor-like protein kinase PERK6 (PERK6) from Arabidopsis thaliana (Mouse-ear cress).